Consider the following 306-residue polypeptide: ADP-polyphosphate phosphotransferase 2 (306 aa).

The protein belongs to the polyphosphate kinase 2 (PPK2) family. Class I subfamily.

It carries out the reaction [phosphate](n) + ATP = [phosphate](n+1) + ADP. The enzyme catalyses [phosphate](n) + GTP = [phosphate](n+1) + GDP. Functionally, uses inorganic polyphosphate (polyP) as a donor to convert ADP to ATP. Can also convert GDP to GTP, with lower efficiency. The protein is ADP-polyphosphate phosphotransferase 2 of Rhizobium meliloti (strain 1021) (Ensifer meliloti).